Consider the following 182-residue polypeptide: Sperm acrosome-associated protein 7 (182 aa).

The N-terminal stretch at 1–24 (MAANRGSRTFLSVFLLCCWQGAEL) is a signal peptide. The N-linked (GlcNAc...) asparagine glycan is linked to Asn-40. Basic and acidic residues predominate over residues 112–140 (LPTKEESGKNDRSTVANLHDHSSQTKHEP). Residues 112 to 154 (LPTKEESGKNDRSTVANLHDHSSQTKHEPPSSPEGKGSSNDDV) are disordered.

In terms of tissue distribution, testis-specific. Expressed in zygotene and pachytene spermatocytes, round spermatids, elongating spermatids and spermatozoa (at protein level). Testis-specific.

The protein resides in the secreted. It is found in the cytoplasmic vesicle. It localises to the secretory vesicle. The protein localises to the acrosome lumen. Functionally, involved in fertilization. Seems not to play a direct role in sperm-egg binding or gamete fusion. In Mus musculus (Mouse), this protein is Sperm acrosome-associated protein 7.